The sequence spans 342 residues: Ferredoxin--NADP reductase (342 aa).

FAD-binding residues include Cys-17, Asp-36, Gln-44, Tyr-49, Val-89, Phe-124, Asp-289, and Thr-330.

Belongs to the ferredoxin--NADP reductase type 2 family. As to quaternary structure, homodimer. FAD is required as a cofactor.

The enzyme catalyses 2 reduced [2Fe-2S]-[ferredoxin] + NADP(+) + H(+) = 2 oxidized [2Fe-2S]-[ferredoxin] + NADPH. This Rhodopseudomonas palustris (strain ATCC BAA-98 / CGA009) protein is Ferredoxin--NADP reductase.